Reading from the N-terminus, the 601-residue chain is Serine/threonine-protein phosphatase 2A 65 kDa regulatory subunit A beta isoform (601 aa).

N-acetylalanine is present on A2. HEAT repeat units lie at residues 20–58 (DSLY…GVER), 59–96 (TRSE…GGPD), 97–135 (FAHC…TPVA), 136–173 (LEAY…ASNA), 174–212 (VKAE…ELDS), 213–251 (VKSE…SQDD), 252–290 (LETL…GPKI), 291–333 (TLND…RETI), 334–372 (IMNQ…GKEN), 373–411 (TIEH…GIRQ), 412–450 (LSQS…GVEF), 451–489 (FDEK…GTEW), 490–528 (AQNT…GQEI), 529–567 (TTKQ…DTNA), and 568–601 (LQGE…LALA).

This sequence belongs to the phosphatase 2A regulatory subunit A family. In terms of assembly, PP2A consists of a common heterodimeric core enzyme, composed of a 36 kDa catalytic subunit (subunit C) and a 65 kDa constant regulatory subunit (PR65 or subunit A), that associates with a variety of regulatory subunits. Proteins that associate with the core dimer include three families of regulatory subunits B (the R2/B/PR55/B55, R3/B''/PR72/PR130/PR59 and R5/B'/B56 families), the 48 kDa variable regulatory subunit, viral proteins, and cell signaling molecules. Interacts with IPO9. Interacts with SGO1. Interacts with RAF1.

The PR65 subunit of protein phosphatase 2A serves as a scaffolding molecule to coordinate the assembly of the catalytic subunit and a variable regulatory B subunit. This is Serine/threonine-protein phosphatase 2A 65 kDa regulatory subunit A beta isoform (PPP2R1B) from Homo sapiens (Human).